The sequence spans 318 residues: DNA-directed RNA polymerase subunit alpha 2 (318 aa).

An alpha N-terminal domain (alpha-NTD) region spans residues 1 to 227 (MALENLLHPT…NQLRNIVDIE (227 aa)). Positions 242-318 (INPILLKHVE…TLIENWPQDL (77 aa)) are alpha C-terminal domain (alpha-CTD).

It belongs to the RNA polymerase alpha chain family. As to quaternary structure, homodimer. The RNAP catalytic core consists of 2 alpha, 1 beta, 1 beta' and 1 omega subunit. When a sigma factor is associated with the core the holoenzyme is formed, which can initiate transcription.

It catalyses the reaction RNA(n) + a ribonucleoside 5'-triphosphate = RNA(n+1) + diphosphate. In terms of biological role, DNA-dependent RNA polymerase catalyzes the transcription of DNA into RNA using the four ribonucleoside triphosphates as substrates. In Francisella tularensis subsp. novicida (strain U112), this protein is DNA-directed RNA polymerase subunit alpha 2.